A 277-amino-acid chain; its full sequence is Alpha-ketoglutarate-dependent dioxygenase tstK (277 aa).

The protein belongs to the asaB hydroxylase/desaturase family.

It catalyses the reaction 2-[(1R,8S,14R,15R)-11-hydroxy-14,15-bis[(6E)-oct-6-en-1-yl]-3,5,9-trioxo-4,10-dioxatetracyclo[9.4.0.0(2,6).0(8,12)]pentadeca-2(6),12-dien-8-yl]acetate + 3 2-oxoglutarate + 3 O2 = phomoidride A + 3 succinate + 3 CO2 + H2O. Alpha-ketoglutarate-dependent dioxygenase; part of the gene cluster that mediates the biosynthesis of the antihypercholesterolemic agents phomoidrides which are dimeric anhydrides. Within the pathway, tstK is responsible for the iterative oxidation necessary to convert prephomoidride to phomoidride A. The pathway begins with the highly reducing polyketide synthase tstiA that catalyzes the formation of a C12-fatty acyl-ACP, starting from one acetate and 5 malonate units. The hydrolase tstM is involved in the release of the C12-fatty acyl chain from phiA. The alkylcitrate synthase (ACS) tstJ and the alkylcitrate dehydratase (ACDH) tstI then give rise to decarboxylated monomeric anhydrides by coupling the C12-fatty acyl chain with oxalacetic acid. The cyclase tstC is responsible for the dimerization of the monomeric anhydrides which leads to the production of prephomoidride that contains the characteristic bicyclo[4.3.1]deca-1,6-diene system of phomoidrides. Iterative oxidation catalyzed by the alpha-ketoglutarate-dependent dioxygenase tstK produced then phomoidride A. Finally, the methyltransferase tstE converts phomoidride A to phomoidride B via an acetalization reaction. The phosphatidylethanolamine-binding protein tstB and tstN are not essential for dimerization and their functions have still to be determined. The polypeptide is Alpha-ketoglutarate-dependent dioxygenase tstK (Talaromyces stipitatus (strain ATCC 10500 / CBS 375.48 / QM 6759 / NRRL 1006) (Penicillium stipitatum)).